Reading from the N-terminus, the 424-residue chain is MAAESDVLHFQFEQQGDVVLQKMNLLRQQNLFCDVSIYINDTEFQGHKVILAACSTFMRDQFLLTQSKHVRITILQSAEVGRKLLLSCYTGALEVKRKELLKYLTAASYLQMVHIVEKCTEALSKYLEIDLSMKNNNQHTDLCQSSDPDVKNEDENSDKDCEIIEISEDSPVNIDFHVKEEESNALQSTVESLTSERKEMKSPELSTVDIGFKDNEICILHVESISTAGVENGQFSQPCTSSKASMYFSETQHSLINSTVESRVAEVPGNQDQGLFCENTEGSYGTVSEIQNLEEGYSLRHQCPRCPRGFLHVENYLRHLKMHKLFLCLQCGKTFTQKKNLNRHIRGHMGIRPFQCTVCLKTFTAKSTLQDHLNIHSGDRPYKCHCCDMDFKHKSALKKHLTSVHGRSSGEKLSRPDLKRQSLL.

A BTB domain is found at 33-97 (CDVSIYINDT…CYTGALEVKR (65 aa)). S202 is modified (phosphoserine). 4 C2H2-type zinc fingers span residues 301–323 (HQCP…LKMH), 326–348 (FLCL…IRGH), 354–376 (FQCT…LNIH), and 382–405 (YKCH…TSVH). Residues 402–424 (TSVHGRSSGEKLSRPDLKRQSLL) form a disordered region. The segment covering 408 to 424 (SSGEKLSRPDLKRQSLL) has biased composition (basic and acidic residues).

Widely expressed with highest levels in brain.

Its subcellular location is the nucleus. Functionally, may be involved in transcriptional regulation. This is Zinc finger and BTB domain-containing protein 6 (ZBTB6) from Homo sapiens (Human).